Consider the following 690-residue polypeptide: Elongation factor G (690 aa).

The tr-type G domain occupies 8-283 (EDYRNFGIMA…AVVDYLPSPV (276 aa)). GTP-binding positions include 17–24 (AHIDAGKT), 81–85 (DTPGH), and 135–138 (NKMD).

This sequence belongs to the TRAFAC class translation factor GTPase superfamily. Classic translation factor GTPase family. EF-G/EF-2 subfamily.

The protein localises to the cytoplasm. Functionally, catalyzes the GTP-dependent ribosomal translocation step during translation elongation. During this step, the ribosome changes from the pre-translocational (PRE) to the post-translocational (POST) state as the newly formed A-site-bound peptidyl-tRNA and P-site-bound deacylated tRNA move to the P and E sites, respectively. Catalyzes the coordinated movement of the two tRNA molecules, the mRNA and conformational changes in the ribosome. This Rhodopseudomonas palustris (strain BisB5) protein is Elongation factor G.